Consider the following 715-residue polypeptide: Nucleolar complex protein 2 homolog (715 aa).

Disordered regions lie at residues 17–71 (SKRI…HKLD), 85–132 (FLQQ…DKTK), and 638–715 (ERSA…SDED). Acidic residues predominate over residues 89–128 (EDADLLNMEDDGDDDEDDDEDDEDEEEEESDDDEDDEEDD). A compositionally biased stretch (basic and acidic residues) spans 638–660 (ERSAVENSKKDDKKKKKEEEAAA).

The protein belongs to the NOC2 family.

Its subcellular location is the nucleus. Required for normal somatic gonad development and for regulation of germline development and proliferation. In Caenorhabditis elegans, this protein is Nucleolar complex protein 2 homolog (pro-2).